The following is a 283-amino-acid chain: Transport and Golgi organization protein 2 (283 aa).

It belongs to the Tango2 family.

It is found in the cytoplasm. The protein localises to the mitochondrion. The protein resides in the golgi apparatus. May play a role in Golgi organization. The protein is Transport and Golgi organization protein 2 (Tango2) of Drosophila melanogaster (Fruit fly).